The chain runs to 345 residues: Anthranilate phosphoribosyltransferase (345 aa).

Residues Gly84, 87–88 (GD), Thr92, 94–97 (NIST), 112–120 (KHGNRSVSS), and Ser124 contribute to the 5-phospho-alpha-D-ribose 1-diphosphate site. Gly84 is a binding site for anthranilate. Ser96 is a Mg(2+) binding site. Asn115 serves as a coordination point for anthranilate. Arg170 lines the anthranilate pocket. Residues Asp229 and Glu230 each coordinate Mg(2+).

This sequence belongs to the anthranilate phosphoribosyltransferase family. As to quaternary structure, homodimer. Mg(2+) serves as cofactor.

It catalyses the reaction N-(5-phospho-beta-D-ribosyl)anthranilate + diphosphate = 5-phospho-alpha-D-ribose 1-diphosphate + anthranilate. The protein operates within amino-acid biosynthesis; L-tryptophan biosynthesis; L-tryptophan from chorismate: step 2/5. Catalyzes the transfer of the phosphoribosyl group of 5-phosphorylribose-1-pyrophosphate (PRPP) to anthranilate to yield N-(5'-phosphoribosyl)-anthranilate (PRA). The sequence is that of Anthranilate phosphoribosyltransferase from Xanthomonas campestris pv. campestris (strain 8004).